Here is a 469-residue protein sequence, read N- to C-terminus: Lactonohydrolase oryH (469 aa).

The first 20 residues, 1 to 20, serve as a signal peptide directing secretion; the sequence is MYLSLRLVSLALCIAPLASA.

The protein belongs to the SMP-30/CGR1 family.

Its pathway is secondary metabolite biosynthesis. In terms of biological role, lactonohydrolase; part of the gene cluster that mediates the biosynthesis of oryzines, natural products with an unusual maleidride backbone. The two subunits of the fungal fatty acid synthase oryfasA and oryfasB probably form octenoic acid. This fatty acid is most likely activated by the acyl-CoA ligase oryP to give octenyl-CoA before the citrate synthase-like protein oryE catalyzes condensation with oxaloacetate to form tricarboxylic acid. The next steps of the pathways are conjectural, but a favorite possible route has been proposed, beginning with decarboxylation and concomitant dehydration by the decarboxylase oryM, followed by tautomerization, which may lead to the production of a diene intermediate. Reduction of this diene intermediate could give the known metabolite piliformic acid. On the pathway to oryzine B and oryzine A, however, hydroxylation of the diene by the alpha-ketoglutarate-dependent dioxygenase oryG and lactonisation by the lactonohydrolases oryH or oryL could give oryzine B directly. Finally, enoyl reduction by the dehydrogenase oryD would then convert oryzine B into oryzine A. In Aspergillus oryzae (strain ATCC 42149 / RIB 40) (Yellow koji mold), this protein is Lactonohydrolase oryH.